The following is a 126-amino-acid chain: Aspartate 1-decarboxylase (126 aa).

Residue Ser25 is the Schiff-base intermediate with substrate; via pyruvic acid of the active site. Position 25 is a pyruvic acid (Ser) (Ser25). Thr57 contacts substrate. Residue Tyr58 is the Proton donor of the active site. A substrate-binding site is contributed by 73–75; it reads GAA.

Belongs to the PanD family. As to quaternary structure, heterooctamer of four alpha and four beta subunits. Pyruvate serves as cofactor. In terms of processing, is synthesized initially as an inactive proenzyme, which is activated by self-cleavage at a specific serine bond to produce a beta-subunit with a hydroxyl group at its C-terminus and an alpha-subunit with a pyruvoyl group at its N-terminus.

The protein resides in the cytoplasm. It carries out the reaction L-aspartate + H(+) = beta-alanine + CO2. It functions in the pathway cofactor biosynthesis; (R)-pantothenate biosynthesis; beta-alanine from L-aspartate: step 1/1. Functionally, catalyzes the pyruvoyl-dependent decarboxylation of aspartate to produce beta-alanine. The protein is Aspartate 1-decarboxylase of Sodalis glossinidius (strain morsitans).